Consider the following 118-residue polypeptide: uncharacterized protein (118 aa).

This is an uncharacterized protein from Escherichia coli (strain K12).